The sequence spans 585 residues: Butyrophilin subfamily 3 member A3 (585 aa).

Residues 1–29 (MKMASSLACLLLNFHVSVFLVQLLTPCSA) form the signal peptide. Ig-like V-type domains lie at 30-139 (QFSV…KALV) and 145-236 (ALGS…ASIS). Residues 30–248 (QFSVLGPSGP…DPFFTSAQPW (219 aa)) are Extracellular-facing. Cystine bridges form between Cys52/Cys126 and Cys166/Cys220. Residue Asn115 is glycosylated (N-linked (GlcNAc...) asparagine). Residues 249 to 269 (IAALAGTLPISLLLLAGASYF) traverse the membrane as a helical segment. At 270–585 (LWRQQKEKIA…KPQACTEALY (316 aa)) the chain is on the cytoplasmic side. Residues 322–518 (RGEKSLAYHE…LTICPTPKEV (197 aa)) form the B30.2/SPRY domain. The interval 560 to 585 (AGAEGVSPSTTTSQNHKPQACTEALY) is disordered. Positions 566–576 (SPSTTTSQNHK) are enriched in polar residues.

This sequence belongs to the immunoglobulin superfamily. BTN/MOG family.

Its subcellular location is the membrane. The polypeptide is Butyrophilin subfamily 3 member A3 (BTN3A3) (Pongo abelii (Sumatran orangutan)).